Here is a 313-residue protein sequence, read N- to C-terminus: Interferon-inducible double-stranded RNA-dependent protein kinase activator A (313 aa).

Over residues 1 to 18 (MSQSRHRAEAPPLEREDS) the composition is skewed to basic and acidic residues. A disordered region spans residues 1 to 21 (MSQSRHRAEAPPLEREDSGTF). Sufficient for self-association and interaction with TARBP2 stretches follow at residues 1–103 (MSQS…KANA), 102–195 (NASI…FSNI), and 195–313 (ISPE…AERK). Phosphoserine is present on Ser18. 3 DRBM domains span residues 34–101 (TPIQ…ILKA), 126–194 (NPIG…KFSN), and 240–308 (DYIQ…YLKI). 3 positions are modified to phosphoserine: Ser167, Ser246, and Ser287.

Belongs to the PRKRA family. In terms of assembly, homodimer. Interacts with EIF2AK2/PKR through its DRBM domains. Interacts with DICER1, AGO2 and TARBP2. Also able to interact with dsRNA. Interacts with UBC9. Forms a complex with UBC9 and p53/TP53. Interacts with DUS2L (via DRBM domain). Interacts with RIGI. As to quaternary structure, (Microbial infection) Interacts with ebolavirus protein VP35; this interaction inhibits the interaction between RIGI and PRKRA. In addition, this interaction disrupts the interaction between VP35 and the viral polymerase L. So the VP35-PRKRA interaction plays a critical role in determining the outcome of ebolavirus infection. The interaction PRKRA-VP35 also prevents PRKRA binding to DICER1 and thus allows the virus to counteract host RNA silencing. (Microbial infection) Interacts with human herpesvirus 8 protein MTA/ORF57; this interaction inhibits stress granule formation. Post-translationally, phosphorylated at Ser-246 in unstressed cells and at Ser-287 in stressed cells. Phosphorylation at Ser-246 appears to be a prerequisite for subsequent phosphorylation at Ser-287. Phosphorylation at Ser-246 and Ser-287 are necessary for activation of EIF2AK2/PKR under conditions of stress.

The protein localises to the cytoplasm. Its subcellular location is the perinuclear region. In terms of biological role, activates EIF2AK2/PKR in the absence of double-stranded RNA (dsRNA), leading to phosphorylation of EIF2S1/EFI2-alpha and inhibition of translation and induction of apoptosis. Required for siRNA production by DICER1 and for subsequent siRNA-mediated post-transcriptional gene silencing. Does not seem to be required for processing of pre-miRNA to miRNA by DICER1. Promotes UBC9-p53/TP53 association and sumoylation and phosphorylation of p53/TP53 at 'Lys-386' at 'Ser-392' respectively and enhances its activity in a EIF2AK2/PKR-dependent manner. In Homo sapiens (Human), this protein is Interferon-inducible double-stranded RNA-dependent protein kinase activator A (PRKRA).